Here is a 465-residue protein sequence, read N- to C-terminus: Antithrombin-III (465 aa).

The N-terminal stretch at 1 to 32 (MYSPGAGSGAAGERKLCLLSLLLIGALGCAIC) is a signal peptide. 2 disulfides stabilise this stretch: Cys41–Cys161 and Cys54–Cys128. Thr64 bears the Phosphothreonine mark. Phosphoserine is present on Ser69. Heparin is bound at residue Trp82. The N-linked (GlcNAc...) asparagine glycan is linked to Asn129. Residue Arg162 coordinates heparin. Asn168 carries an N-linked (GlcNAc...) asparagine glycan. Arg178 provides a ligand contact to heparin. Asn188 and Asn225 each carry an N-linked (GlcNAc...) asparagine glycan. An intrachain disulfide couples Cys280 to Cys463.

It belongs to the serpin family. Forms protease inhibiting heterodimer with TMPRSS7. In terms of processing, phosphorylated by FAM20C in the extracellular medium. As to expression, plasma.

The protein resides in the secreted. It localises to the extracellular space. In terms of biological role, most important serine protease inhibitor in plasma that regulates the blood coagulation cascade. AT-III inhibits thrombin, matriptase-3/TMPRSS7, as well as factors IXa, Xa and XIa. Its inhibitory activity is greatly enhanced in the presence of heparin. This is Antithrombin-III (Serpinc1) from Mus musculus (Mouse).